The primary structure comprises 290 residues: uncharacterized protein (290 aa).

The protein localises to the cell membrane. It localises to the membrane raft. This is an uncharacterized protein from Bacillus subtilis (strain 168).